A 238-amino-acid chain; its full sequence is Uridylate kinase (238 aa).

12–15 lines the ATP pocket; the sequence is KLSG. Position 54 (Gly54) interacts with UMP. The ATP site is built by Gly55 and Arg59. Residues Asp74 and 135–142 contribute to the UMP site; that span reads TGNPYFTT. The ATP site is built by Thr162, Tyr168, and Asp171.

Belongs to the UMP kinase family. In terms of assembly, homohexamer.

It is found in the cytoplasm. It catalyses the reaction UMP + ATP = UDP + ADP. It participates in pyrimidine metabolism; CTP biosynthesis via de novo pathway; UDP from UMP (UMPK route): step 1/1. Inhibited by UTP. Catalyzes the reversible phosphorylation of UMP to UDP. The sequence is that of Uridylate kinase from Nitratidesulfovibrio vulgaris (strain ATCC 29579 / DSM 644 / CCUG 34227 / NCIMB 8303 / VKM B-1760 / Hildenborough) (Desulfovibrio vulgaris).